We begin with the raw amino-acid sequence, 294 residues long: 33 kDa chaperonin (294 aa).

2 cysteine pairs are disulfide-bonded: cysteine 238–cysteine 240 and cysteine 271–cysteine 274.

Belongs to the HSP33 family. Post-translationally, under oxidizing conditions two disulfide bonds are formed involving the reactive cysteines. Under reducing conditions zinc is bound to the reactive cysteines and the protein is inactive.

Its subcellular location is the cytoplasm. Its function is as follows. Redox regulated molecular chaperone. Protects both thermally unfolding and oxidatively damaged proteins from irreversible aggregation. Plays an important role in the bacterial defense system toward oxidative stress. The sequence is that of 33 kDa chaperonin from Caldanaerobacter subterraneus subsp. tengcongensis (strain DSM 15242 / JCM 11007 / NBRC 100824 / MB4) (Thermoanaerobacter tengcongensis).